We begin with the raw amino-acid sequence, 250 residues long: Peptidyl-tRNA hydrolase (250 aa).

TRNA is bound at residue Tyr14. Residue His19 is the Proton acceptor of the active site. Phe64, Asn66, and Asn112 together coordinate tRNA. A disordered region spans residues 192–250 (MGDGNQRPGGVKTDPAQLEKAPPKAQSHIRQARQNQKKPNIPESGPMAEMLKKLLGKKD). Residues 219–229 (HIRQARQNQKK) are compositionally biased toward polar residues. Over residues 241–250 (MLKKLLGKKD) the composition is skewed to basic and acidic residues.

It belongs to the PTH family. Monomer.

It localises to the cytoplasm. The enzyme catalyses an N-acyl-L-alpha-aminoacyl-tRNA + H2O = an N-acyl-L-amino acid + a tRNA + H(+). Hydrolyzes ribosome-free peptidyl-tRNAs (with 1 or more amino acids incorporated), which drop off the ribosome during protein synthesis, or as a result of ribosome stalling. Its function is as follows. Catalyzes the release of premature peptidyl moieties from peptidyl-tRNA molecules trapped in stalled 50S ribosomal subunits, and thus maintains levels of free tRNAs and 50S ribosomes. In Brucella canis (strain ATCC 23365 / NCTC 10854 / RM-666), this protein is Peptidyl-tRNA hydrolase.